The sequence spans 156 residues: MKLALVAVGQRLPAWAETACEDYLKRFPADWRVELKAVKAEPRTQGKTVDAMKAAEAQRIEAACARGVRRVVLDERGTRLTTQQLAQRLQAWQLDGRDVALLIGGPDGLADTLKDGADETLRLSDLTLPHAFARVLLAEALYRAWSVNAGHPYHRE.

S-adenosyl-L-methionine contacts are provided by residues Leu73, Gly104, and 123 to 128 (LSDLTL).

It belongs to the RNA methyltransferase RlmH family. In terms of assembly, homodimer.

The protein localises to the cytoplasm. The catalysed reaction is pseudouridine(1915) in 23S rRNA + S-adenosyl-L-methionine = N(3)-methylpseudouridine(1915) in 23S rRNA + S-adenosyl-L-homocysteine + H(+). Specifically methylates the pseudouridine at position 1915 (m3Psi1915) in 23S rRNA. The sequence is that of Ribosomal RNA large subunit methyltransferase H from Methylibium petroleiphilum (strain ATCC BAA-1232 / LMG 22953 / PM1).